An 86-amino-acid chain; its full sequence is Putative membrane protein insertion efficiency factor (86 aa).

It belongs to the UPF0161 family.

The protein localises to the cell inner membrane. Its function is as follows. Could be involved in insertion of integral membrane proteins into the membrane. This chain is Putative membrane protein insertion efficiency factor, found in Haemophilus influenzae (strain 86-028NP).